Reading from the N-terminus, the 347-residue chain is Core-capsid bridging protein (347 aa).

A disordered region spans residues 290–320 (GYRGTTFQRRATAPSRRRGPSRRRRRRKATL). The span at 304–318 (SRRRGPSRRRRRRKA) shows a compositional bias: basic residues.

This sequence belongs to the adenoviridae core-capsid bridging protein family. Monomer. Homodimer. Exists in equilibrium between monomers and dimers in solution. Interacts with the histone-like nucleoprotein; this interactions bridge the virus core to the capsid. Interacts with core protein X; this interactions bridge the virus core to the capsid. Interacts with the endosome lysis protein VI; this interactions bridge the virus core to the capsid. Interacts with the peripentonal hexons. Interacts with host NPM1; this interaction might play a role in virus assembly.

Its subcellular location is the virion. It localises to the host nucleus. The protein localises to the host nucleolus. In terms of biological role, associates loosely with the viral DNA to form an outer shell around the nucleoprotein-DNA complex and links it with the capsid by binding the endosome lysis protein. Dissociates from the viral genome during entry. Might be involved in nuclear capsid assembly of the viral particles through its association with NPM1/nucleophosmin. In Homo sapiens (Human), this protein is Core-capsid bridging protein.